Consider the following 137-residue polypeptide: MNIALVAHDKKKDDLIVLIKTYAHILKKHQLFATGTTGKRIAEATGLPVHCFRSGPLGGDQEIGAAVARGEMDMIIFFRDPLTAQPHEPDVSALMRLCDVYSIPLSTNMGGSEILIRSIEQGDFESLKLSHNDEPPA.

One can recognise an MGS-like domain in the interval 1-137 (MNIALVAHDK…KLSHNDEPPA (137 aa)). Substrate contacts are provided by residues H8, K12, 34-37 (TGTT), and 54-55 (SG). D60 functions as the Proton donor/acceptor in the catalytic mechanism. H87 provides a ligand contact to substrate.

It belongs to the methylglyoxal synthase family.

The catalysed reaction is dihydroxyacetone phosphate = methylglyoxal + phosphate. In terms of biological role, catalyzes the formation of methylglyoxal from dihydroxyacetone phosphate. The polypeptide is Methylglyoxal synthase (Exiguobacterium sp. (strain ATCC BAA-1283 / AT1b)).